Reading from the N-terminus, the 367-residue chain is Inositol-3-phosphate synthase (367 aa).

Positions 78, 137, 157, 200, 235, and 248 each coordinate NAD(+).

It belongs to the myo-inositol 1-phosphate synthase family. NAD(+) is required as a cofactor.

The enzyme catalyses D-glucose 6-phosphate = 1D-myo-inositol 3-phosphate. Its function is as follows. Key enzyme in myo-inositol biosynthesis pathway that catalyzes the conversion of glucose 6-phosphate to 1D-myo-inositol 3-phosphate in a NAD-dependent manner. The chain is Inositol-3-phosphate synthase (ino1) from Mycobacterium tuberculosis (strain CDC 1551 / Oshkosh).